We begin with the raw amino-acid sequence, 984 residues long: Glutamate [NMDA] receptor subunit 1 (984 aa).

The first 24 residues, 1–24 (MAAAFAYRWLLCAAGIVNVLPIGA), serve as a signal peptide directing secretion. Residues 25 to 570 (QRHTASDNPS…TLVSFLQPFS (546 aa)) lie on the Extracellular side of the membrane. N-linked (GlcNAc...) asparagine glycans are attached at residues N255, N311, N342, N394, N451, N478, and N498. Glycine is bound by residues 527-529 (PLT) and R534. A helical transmembrane segment spans residues 571–591 (NTLWILVMVSVHVVALVLYLL). The Cytoplasmic segment spans residues 592 to 648 (DRFSPFGRFKLSHSDSNEEKALNLSSAVWFAWGVLLNSGIGEGTPRSFSARVLGMVW). The helical transmembrane segment at 649-669 (AGFAMIIVASYTANLAAFLVL) threads the bilayer. Residues 670–828 (ERPKTKLSGI…KTPNTLGLKN (159 aa)) lie on the Extracellular side of the membrane. Residue N690 is glycosylated (N-linked (GlcNAc...) asparagine). 2 residues coordinate glycine: S700 and D744. The chain crosses the membrane as a helical span at residues 829–849 (MAGVFILVGVGIAGGVGLIII). The Cytoplasmic portion of the chain corresponds to 850 to 984 (EVIYKKHQVK…YTSDVSHLVV (135 aa)). A disordered region spans residues 947-984 (KSGLVPPALGLGKTRPQQNPLPPRYSPGYTSDVSHLVV). Over residues 974–984 (GYTSDVSHLVV) the composition is skewed to polar residues.

The protein belongs to the glutamate-gated ion channel (TC 1.A.10.1) family. In terms of assembly, forms a heteromeric NMDA channel with Nmdar2.

Its subcellular location is the cell membrane. The protein resides in the postsynaptic cell membrane. The protein localises to the postsynaptic density. Functionally, NMDA receptor subtype of glutamate-gated ion channels with high calcium permeability and voltage-dependent sensitivity to magnesium. Mediated by glycine. This protein plays a key role in synaptic plasticity, synaptogenesis, excitotoxicity, memory acquisition and learning. It mediates neuronal functions in glutamate neurotransmission. Is involved in the cell surface targeting of NMDA receptors. Plays a role in associative learning and in long-term memory consolidation. This is Glutamate [NMDA] receptor subunit 1 from Drosophila virilis (Fruit fly).